Consider the following 264-residue polypeptide: MKNRRRIYEGKAKILYEGPEPGTLIQFFKDDATAFNKKKHEVVDGKGVLNNRISEHIFNHLNRMGIPTHFIRRLNMREQLIKEVEIIPLEVVVRNVAAGSLSKRLGIEEGTVLPRSIIEFYYKADALDDPMVSEEHITAFGWASPQEIDDVMALAIRVNDFLSGLFMGVGIQLVDFKIECGRLFEGDMMRIVVADEISPDSCRLWDVATQDKLDKDRFRRDMGGLVEAYQEVARRLGIMNENEPPRPTGPVLVASTDVVKGKPH.

It belongs to the SAICAR synthetase family.

It carries out the reaction 5-amino-1-(5-phospho-D-ribosyl)imidazole-4-carboxylate + L-aspartate + ATP = (2S)-2-[5-amino-1-(5-phospho-beta-D-ribosyl)imidazole-4-carboxamido]succinate + ADP + phosphate + 2 H(+). It participates in purine metabolism; IMP biosynthesis via de novo pathway; 5-amino-1-(5-phospho-D-ribosyl)imidazole-4-carboxamide from 5-amino-1-(5-phospho-D-ribosyl)imidazole-4-carboxylate: step 1/2. The polypeptide is Phosphoribosylaminoimidazole-succinocarboxamide synthase 1 (purC1) (Mesorhizobium japonicum (strain LMG 29417 / CECT 9101 / MAFF 303099) (Mesorhizobium loti (strain MAFF 303099))).